The sequence spans 181 residues: MHGSALLCCCLVLLAGVGASRHQSTLLEDDCTHFPASLPHMLRELRAAFGRVKIFFQMKDKLDNILLTGSLLEDFKSYLGCQALSEMIQFYLEEVMPRAENHDPDIKNHVNSLGEKLKTLRLRLRLRRCHRFLPCENKSKAVEQVKSAFSKLQEKGVYKAMSEFDIFINYIETYMTMRMKI.

A signal peptide spans 1–19 (MHGSALLCCCLVLLAGVGA). Cystine bridges form between Cys-31-Cys-129 and Cys-81-Cys-135. A glycan (N-linked (GlcNAc...) asparagine) is linked at Asn-137.

The protein belongs to the IL-10 family. As to quaternary structure, homodimer. Interacts with IL10RA and IL10RB.

The protein resides in the secreted. Its function is as follows. Major immune regulatory cytokine that acts on many cells of the immune system where it has profound anti-inflammatory functions, limiting excessive tissue disruption caused by inflammation. Mechanistically, IL10 binds to its heterotetrameric receptor comprising IL10RA and IL10RB leading to JAK1 and STAT2-mediated phosphorylation of STAT3. In turn, STAT3 translocates to the nucleus where it drives expression of anti-inflammatory mediators. Targets antigen-presenting cells (APCs) such as macrophages and monocytes and inhibits their release of pro-inflammatory cytokines including granulocyte-macrophage colony-stimulating factor /GM-CSF, granulocyte colony-stimulating factor/G-CSF, IL-1 alpha, IL-1 beta, IL-6, IL-8 and TNF-alpha. Also interferes with antigen presentation by reducing the expression of MHC-class II and co-stimulatory molecules, thereby inhibiting their ability to induce T cell activation. In addition, controls the inflammatory response of macrophages by reprogramming essential metabolic pathways including mTOR signaling. In Canis lupus familiaris (Dog), this protein is Interleukin-10 (IL10).